Reading from the N-terminus, the 246-residue chain is Transcriptional regulatory protein LytR (246 aa).

The region spanning 2–116 (KALIIDDEPL…RIEQAVNKVR (115 aa)) is the Response regulatory domain. A 4-aspartylphosphate modification is found at Asp-53. An HTH LytTR-type domain is found at 141-245 (LPVEIDDKIH…MKDFKASIGL (105 aa)).

As to quaternary structure, homodimer; when phosphorylated. In terms of processing, phosphorylated and dephosphorylated by LytS.

Its subcellular location is the cytoplasm. Member of the two-component regulatory system LytR/LytS that regulates genes involved in autolysis, programmed cell death, biofilm formation and cell wall metabolism. Also participates in sensing and responding to host defense cationic antimicrobial peptides (HDPs). Upon phosphorylation by LytS, functions as a transcription regulator by direct binding to promoter regions of target genes including lrgA and lrgB, to positively regulate their expression. The protein is Transcriptional regulatory protein LytR (lytR) of Staphylococcus aureus (strain MW2).